A 247-amino-acid polypeptide reads, in one-letter code: Coproheme decarboxylase (247 aa).

Residues R129, 143–147 (YPMDK), H170, Q183, and S221 each bind Fe-coproporphyrin III. Y143 is an active-site residue.

Belongs to the ChdC family. Type 1 subfamily. Fe-coproporphyrin III is required as a cofactor.

The enzyme catalyses Fe-coproporphyrin III + 2 H2O2 + 2 H(+) = heme b + 2 CO2 + 4 H2O. It carries out the reaction Fe-coproporphyrin III + H2O2 + H(+) = harderoheme III + CO2 + 2 H2O. It catalyses the reaction harderoheme III + H2O2 + H(+) = heme b + CO2 + 2 H2O. It functions in the pathway porphyrin-containing compound metabolism; protoheme biosynthesis. Involved in coproporphyrin-dependent heme b biosynthesis. Catalyzes the decarboxylation of Fe-coproporphyrin III (coproheme) to heme b (protoheme IX), the last step of the pathway. The reaction occurs in a stepwise manner with a three-propionate intermediate. The protein is Coproheme decarboxylase of Bacillus cereus (strain B4264).